The sequence spans 325 residues: uncharacterized protein (325 aa).

Residues 108-141 (PHRTQGISSTSSKSSKGGKKTPVRSTPKEIKKAT) form a disordered region.

This is an uncharacterized protein from Homo sapiens (Human).